We begin with the raw amino-acid sequence, 735 residues long: Alpha-adducin (735 aa).

At methionine 1 the chain carries N-acetylmethionine. The span at 1 to 11 (MNGDTRAAVVT) shows a compositional bias: low complexity. Residues 1 to 21 (MNGDTRAAVVTSPPPTTAPHK) form a disordered region. Phosphoserine is present on residues serine 12, serine 59, and serine 64. Phosphothreonine is present on threonine 331. Phosphoserine occurs at positions 334, 353, and 355. Phosphothreonine is present on threonine 358. Phosphoserine occurs at positions 364, 366, 408, and 427. 2 disordered regions span residues 418 to 487 (GHSF…AVPN) and 576 to 735 (RREV…KSDS). Phosphothreonine is present on threonine 429. Phosphoserine is present on residues serine 431 and serine 436. Residues 440-455 (QQREKTRWLHSGRGDD) show a composition bias toward basic and acidic residues. At threonine 445 the chain carries Phosphothreonine; by ROCK2. Serine 464 and serine 465 each carry phosphoserine. Residue threonine 480 is modified to Phosphothreonine; by ROCK2. Residue serine 481 is modified to Phosphoserine; by PKA. The segment covering 576 to 601 (RREVERKQKGSEENLDETREQKEKSP) has biased composition (basic and acidic residues). Residues serine 586, serine 600, and serine 605 each carry the phosphoserine modification. Phosphothreonine is present on threonine 610. At serine 613 the chain carries Phosphoserine. Threonine 614 bears the Phosphothreonine mark. Positions 698-712 (GSPMDPGSDGSPGKS) are enriched in low complexity. Residues serine 705, serine 708, and serine 712 each carry the phosphoserine modification. A compositionally biased stretch (basic residues) spans 713–735 (PSKKKKKFRTPSFLKKSKKKSDS). Serine 714 is modified (phosphoserine; by PKC). Positions 715-732 (KKKKKFRTPSFLKKSKKK) are interaction with calmodulin. Position 724 is a phosphoserine; by PKA and PKC (serine 724).

This sequence belongs to the aldolase class II family. Adducin subfamily. In terms of assembly, heterodimer of an alpha and a beta subunit or an alpha and a gamma subunit.

It is found in the cytoplasm. Its subcellular location is the cytoskeleton. The protein localises to the cell membrane. Membrane-cytoskeleton-associated protein that promotes the assembly of the spectrin-actin network. Binds to calmodulin. This is Alpha-adducin (Add1) from Mus musculus (Mouse).